Here is a 74-residue protein sequence, read N- to C-terminus: UPF0270 protein NT01EI_3666 (74 aa).

Belongs to the UPF0270 family.

The polypeptide is UPF0270 protein NT01EI_3666 (Edwardsiella ictaluri (strain 93-146)).